The chain runs to 369 residues: Anhydro-N-acetylmuramic acid kinase (369 aa).

An ATP-binding site is contributed by 12–19 (GTSMDGVD).

Belongs to the anhydro-N-acetylmuramic acid kinase family.

The enzyme catalyses 1,6-anhydro-N-acetyl-beta-muramate + ATP + H2O = N-acetyl-D-muramate 6-phosphate + ADP + H(+). It functions in the pathway amino-sugar metabolism; 1,6-anhydro-N-acetylmuramate degradation. Its pathway is cell wall biogenesis; peptidoglycan recycling. Functionally, catalyzes the specific phosphorylation of 1,6-anhydro-N-acetylmuramic acid (anhMurNAc) with the simultaneous cleavage of the 1,6-anhydro ring, generating MurNAc-6-P. Is required for the utilization of anhMurNAc either imported from the medium or derived from its own cell wall murein, and thus plays a role in cell wall recycling. The polypeptide is Anhydro-N-acetylmuramic acid kinase (Shewanella oneidensis (strain ATCC 700550 / JCM 31522 / CIP 106686 / LMG 19005 / NCIMB 14063 / MR-1)).